A 477-amino-acid polypeptide reads, in one-letter code: Stromelysin-3 (477 aa).

The N-terminal stretch at 1–17 (MHLLILLPALCVLGAHS) is a signal peptide. A propeptide spans 18–85 (APLSYTYLQH…SSSGRNRQKR (68 aa)) (activation peptide). Residues 64–83 (RCGVPDIPAPPDSSSGRNRQ) are disordered. Residues Cys-65, His-152, and Asp-154 each coordinate Zn(2+). Residues Asp-159, Gly-160, Gly-162, and Ile-164 each coordinate Ca(2+). Positions 167, 180, and 203 each coordinate Zn(2+). Residue Glu-204 is part of the active site. His-207 and His-213 together coordinate Zn(2+). Cysteines 279 and 466 form a disulfide. Hemopexin repeat units lie at residues 280 to 324 (KTNF…WRGI), 325 to 369 (PDTV…GISV), 370 to 418 (TQIQ…WRGV), and 419 to 466 (PKGI…FFNC).

The protein belongs to the peptidase M10A family. Requires Ca(2+) as cofactor. Zn(2+) is required as a cofactor. As to expression, expressed in fibroblast cells that are activated by thyroid hormone. High levels in resorbing tail.

It localises to the secreted. The protein resides in the extracellular space. It is found in the extracellular matrix. Functionally, may be involved in the modification of the extracellular matrix during metamorphic apoptosis. This chain is Stromelysin-3 (mmp11), found in Xenopus laevis (African clawed frog).